The sequence spans 298 residues: N-acetylmuramic acid 6-phosphate etherase (298 aa).

The SIS domain occupies 57–220 (IAAAFGKGGR…STGAMIRTGK (164 aa)). The Proton donor role is filled by glutamate 85. The active site involves glutamate 116.

The protein belongs to the GCKR-like family. MurNAc-6-P etherase subfamily. As to quaternary structure, homodimer.

The catalysed reaction is N-acetyl-D-muramate 6-phosphate + H2O = N-acetyl-D-glucosamine 6-phosphate + (R)-lactate. Its pathway is amino-sugar metabolism; 1,6-anhydro-N-acetylmuramate degradation. The protein operates within amino-sugar metabolism; N-acetylmuramate degradation. It functions in the pathway cell wall biogenesis; peptidoglycan recycling. In terms of biological role, specifically catalyzes the cleavage of the D-lactyl ether substituent of MurNAc 6-phosphate, producing GlcNAc 6-phosphate and D-lactate. Together with AnmK, is also required for the utilization of anhydro-N-acetylmuramic acid (anhMurNAc) either imported from the medium or derived from its own cell wall murein, and thus plays a role in cell wall recycling. The protein is N-acetylmuramic acid 6-phosphate etherase of Aeromonas hydrophila subsp. hydrophila (strain ATCC 7966 / DSM 30187 / BCRC 13018 / CCUG 14551 / JCM 1027 / KCTC 2358 / NCIMB 9240 / NCTC 8049).